A 338-amino-acid polypeptide reads, in one-letter code: tRNA N6-adenosine threonylcarbamoyltransferase (338 aa).

His111 and His115 together coordinate Fe cation. Substrate-binding positions include 134-138 (LVSGG), Asp167, Gly180, and Asn272. Asp300 lines the Fe cation pocket.

It belongs to the KAE1 / TsaD family. Fe(2+) is required as a cofactor.

The protein resides in the cytoplasm. It carries out the reaction L-threonylcarbamoyladenylate + adenosine(37) in tRNA = N(6)-L-threonylcarbamoyladenosine(37) in tRNA + AMP + H(+). In terms of biological role, required for the formation of a threonylcarbamoyl group on adenosine at position 37 (t(6)A37) in tRNAs that read codons beginning with adenine. Is involved in the transfer of the threonylcarbamoyl moiety of threonylcarbamoyl-AMP (TC-AMP) to the N6 group of A37, together with TsaE and TsaB. TsaD likely plays a direct catalytic role in this reaction. In Nitrosomonas eutropha (strain DSM 101675 / C91 / Nm57), this protein is tRNA N6-adenosine threonylcarbamoyltransferase.